Here is a 453-residue protein sequence, read N- to C-terminus: Serine protease HTRA3 (453 aa).

The first 17 residues, 1–17, serve as a signal peptide directing secretion; that stretch reads MQARALLLAALAALALA. The IGFBP N-terminal domain maps to 21–84; that stretch reads PAAPCPARCD…ECVRGLCRCR (64 aa). Cystine bridges form between Cys-25–Cys-48, Cys-29–Cys-50, Cys-34–Cys-51, Cys-39–Cys-54, Cys-62–Cys-76, Cys-70–Cys-81, Cys-83–Cys-101, and Cys-90–Cys-126. Residues 64–128 form the Kazal-like domain; sequence GPLDSPCGES…RQLQKGACPL (65 aa). Residues 175 to 340 form a serine protease region; that stretch reads GSGFIMSEAG…AIPSDRITRF (166 aa). Catalysis depends on charge relay system residues His-191, Asp-227, and Ser-305. Positions 359–444 constitute a PDZ domain; that stretch reads IRMRTITPSL…EVRRGNDDLL (86 aa).

This sequence belongs to the peptidase S1C family. As to quaternary structure, homotrimer. Interacts with TGFB1; the interaction inhibits TGFB-mediated signaling. Interacts with BMP4; the interaction inhibits BMP4-mediated signaling. Interacts with TGFB2 and GDF5. Interacts with MYH9. Widely expressed, with highest levels in both adult and fetal heart, ovary, uterus placenta, and bladder. In the endometrium, expressed in epithelial glands and the stroma. Also present in leukocytes. Isoform 1 is predominant in heart and skeletal muscle, whereas isoform 2 is predominant in placenta and kidney.

The protein localises to the secreted. Functionally, serine protease that cleaves beta-casein/CSN2 as well as several extracellular matrix (ECM) proteoglycans such as decorin/DCN, biglycan/BGN and fibronectin/FN1. Inhibits signaling mediated by TGF-beta family proteins possibly indirectly by degradation of these ECM proteoglycans. May act as a tumor suppressor. Negatively regulates, in vitro, trophoblast invasion during placental development and may be involved in the development of the placenta in vivo. May also have a role in ovarian development, granulosa cell differentiation and luteinization. In Homo sapiens (Human), this protein is Serine protease HTRA3 (HTRA3).